A 429-amino-acid polypeptide reads, in one-letter code: Glutamate-1-semialdehyde 2,1-aminomutase 1 (429 aa).

K268 is subject to N6-(pyridoxal phosphate)lysine.

Belongs to the class-III pyridoxal-phosphate-dependent aminotransferase family. HemL subfamily. In terms of assembly, homodimer. Pyridoxal 5'-phosphate serves as cofactor.

The protein localises to the cytoplasm. The enzyme catalyses (S)-4-amino-5-oxopentanoate = 5-aminolevulinate. It participates in porphyrin-containing compound metabolism; protoporphyrin-IX biosynthesis; 5-aminolevulinate from L-glutamyl-tRNA(Glu): step 2/2. The sequence is that of Glutamate-1-semialdehyde 2,1-aminomutase 1 from Lysinibacillus sphaericus (strain C3-41).